Reading from the N-terminus, the 382-residue chain is Dual-specificity RNA methyltransferase RlmN (382 aa).

Glutamate 91 (proton acceptor) is an active-site residue. In terms of domain architecture, Radical SAM core spans 97-339 (ETDRGTLCIS…TTVRKTRGDD (243 aa)). Cysteine 104 and cysteine 344 are disulfide-bonded. [4Fe-4S] cluster-binding residues include cysteine 111, cysteine 115, and cysteine 118. Residues 165–166 (GE), serine 197, 219–221 (SLH), and asparagine 301 contribute to the S-adenosyl-L-methionine site. Cysteine 344 acts as the S-methylcysteine intermediate in catalysis.

Belongs to the radical SAM superfamily. RlmN family. [4Fe-4S] cluster is required as a cofactor.

The protein localises to the cytoplasm. The enzyme catalyses adenosine(2503) in 23S rRNA + 2 reduced [2Fe-2S]-[ferredoxin] + 2 S-adenosyl-L-methionine = 2-methyladenosine(2503) in 23S rRNA + 5'-deoxyadenosine + L-methionine + 2 oxidized [2Fe-2S]-[ferredoxin] + S-adenosyl-L-homocysteine. It catalyses the reaction adenosine(37) in tRNA + 2 reduced [2Fe-2S]-[ferredoxin] + 2 S-adenosyl-L-methionine = 2-methyladenosine(37) in tRNA + 5'-deoxyadenosine + L-methionine + 2 oxidized [2Fe-2S]-[ferredoxin] + S-adenosyl-L-homocysteine. Functionally, specifically methylates position 2 of adenine 2503 in 23S rRNA and position 2 of adenine 37 in tRNAs. m2A2503 modification seems to play a crucial role in the proofreading step occurring at the peptidyl transferase center and thus would serve to optimize ribosomal fidelity. This is Dual-specificity RNA methyltransferase RlmN from Polaromonas sp. (strain JS666 / ATCC BAA-500).